The sequence spans 264 residues: MSDLLSALLLGILEGLTEFLPISSTGHLLIAQHWLGARSDFFNIVIQAGAIVAVVLVFRQRLLQLATGFNQRGNREYVFKLGAAFLVTAVVGLVVRKAGWSLPETVSPVAWALIIGGVWMLLVEAYTARLPDRDQVTWTVAIGVGLAQVVAGVFPGTSRSASAIFLAMLLGLSRRAAAAEFVFLVGIPTMFAASAYTFLEMAKAGQLGSEDWADVGVAFLAAAITGFVVVKWLMGYIKSHRFTAFAIYRIALGAALLLWLPSGS.

7 consecutive transmembrane segments (helical) span residues 38 to 58, 75 to 95, 106 to 126, 136 to 156, 181 to 201, 217 to 237, and 242 to 262; these read RSDF…VLVF, REYV…GLVV, VSPV…VEAY, VTWT…VFPG, FVFL…FLEM, VAFL…MGYI, and FTAF…WLPS.

It belongs to the UppP family.

The protein localises to the cell membrane. The catalysed reaction is di-trans,octa-cis-undecaprenyl diphosphate + H2O = di-trans,octa-cis-undecaprenyl phosphate + phosphate + H(+). Functionally, catalyzes the dephosphorylation of undecaprenyl diphosphate (UPP). Confers resistance to bacitracin. This is Undecaprenyl-diphosphatase from Stenotrophomonas maltophilia (strain K279a).